Reading from the N-terminus, the 337-residue chain is Ketol-acid reductoisomerase (NADP(+)) (337 aa).

The region spanning 1 to 180 is the KARI N-terminal Rossmann domain; sequence MQVYYDKDAD…GGTKGGVIET (180 aa). NADP(+) contacts are provided by residues 24–27, arginine 47, and serine 51; that span reads YGSQ. The active site involves histidine 106. Glycine 132 is a binding site for NADP(+). Positions 181 to 326 constitute a KARI C-terminal knotted domain; that stretch reads TFREETETDL…AQLRAMMPWI (146 aa). Mg(2+) is bound by residues aspartate 189, glutamate 193, glutamate 225, and glutamate 229. Serine 250 contributes to the substrate binding site.

The protein belongs to the ketol-acid reductoisomerase family. The cofactor is Mg(2+).

It carries out the reaction (2R)-2,3-dihydroxy-3-methylbutanoate + NADP(+) = (2S)-2-acetolactate + NADPH + H(+). The catalysed reaction is (2R,3R)-2,3-dihydroxy-3-methylpentanoate + NADP(+) = (S)-2-ethyl-2-hydroxy-3-oxobutanoate + NADPH + H(+). It functions in the pathway amino-acid biosynthesis; L-isoleucine biosynthesis; L-isoleucine from 2-oxobutanoate: step 2/4. It participates in amino-acid biosynthesis; L-valine biosynthesis; L-valine from pyruvate: step 2/4. Involved in the biosynthesis of branched-chain amino acids (BCAA). Catalyzes an alkyl-migration followed by a ketol-acid reduction of (S)-2-acetolactate (S2AL) to yield (R)-2,3-dihydroxy-isovalerate. In the isomerase reaction, S2AL is rearranged via a Mg-dependent methyl migration to produce 3-hydroxy-3-methyl-2-ketobutyrate (HMKB). In the reductase reaction, this 2-ketoacid undergoes a metal-dependent reduction by NADPH to yield (R)-2,3-dihydroxy-isovalerate. The protein is Ketol-acid reductoisomerase (NADP(+)) of Neisseria meningitidis serogroup C (strain 053442).